A 492-amino-acid chain; its full sequence is 3-octaprenyl-4-hydroxybenzoate carboxy-lyase (492 aa).

A Mn(2+)-binding site is contributed by asparagine 172. Prenylated FMN is bound by residues 175–177 (IYR), 189–191 (RWL), and 194–195 (RG). Glutamate 238 is a Mn(2+) binding site. Aspartate 287 serves as the catalytic Proton donor.

The protein belongs to the UbiD family. In terms of assembly, homohexamer. Requires prenylated FMN as cofactor. The cofactor is Mn(2+).

It is found in the cell membrane. It carries out the reaction a 4-hydroxy-3-(all-trans-polyprenyl)benzoate + H(+) = a 2-(all-trans-polyprenyl)phenol + CO2. Its pathway is cofactor biosynthesis; ubiquinone biosynthesis. Functionally, catalyzes the decarboxylation of 3-octaprenyl-4-hydroxy benzoate to 2-octaprenylphenol, an intermediate step in ubiquinone biosynthesis. The chain is 3-octaprenyl-4-hydroxybenzoate carboxy-lyase from Pasteurella multocida (strain Pm70).